The sequence spans 485 residues: Probable cobyric acid synthase (485 aa).

Positions 250 to 435 (EIEIAVIRLP…LHGLFDNKNI (186 aa)) constitute a GATase cobBQ-type domain. Cysteine 328 acts as the Nucleophile in catalysis. The active site involves histidine 427.

The protein belongs to the CobB/CobQ family. CobQ subfamily.

The protein operates within cofactor biosynthesis; adenosylcobalamin biosynthesis. In terms of biological role, catalyzes amidations at positions B, D, E, and G on adenosylcobyrinic A,C-diamide. NH(2) groups are provided by glutamine, and one molecule of ATP is hydrogenolyzed for each amidation. This Methanosarcina barkeri (strain Fusaro / DSM 804) protein is Probable cobyric acid synthase.